The sequence spans 130 residues: MAENQYYGTGRRKSSAARVFIKPGSGEIVINKRSLDVYFGRPTSRMVVKQPLELVELTEKLDLYITVSGGGISGQAGAIRHGITRALMEYDETLRPALRAAGYVTRDARCVERKKVGLRKARRKPQFSKR.

Belongs to the universal ribosomal protein uS9 family.

The sequence is that of Small ribosomal subunit protein uS9 from Vibrio atlanticus (strain LGP32) (Vibrio splendidus (strain Mel32)).